We begin with the raw amino-acid sequence, 317 residues long: Beta-ketoacyl-[acyl-carrier-protein] synthase III (317 aa).

Residues cysteine 112 and histidine 244 contribute to the active site. Residues 245-249 form an ACP-binding region; that stretch reads QANLR. Asparagine 274 is a catalytic residue.

The protein belongs to the thiolase-like superfamily. FabH family. As to quaternary structure, homodimer.

The protein resides in the cytoplasm. It carries out the reaction malonyl-[ACP] + acetyl-CoA + H(+) = 3-oxobutanoyl-[ACP] + CO2 + CoA. It functions in the pathway lipid metabolism; fatty acid biosynthesis. Functionally, catalyzes the condensation reaction of fatty acid synthesis by the addition to an acyl acceptor of two carbons from malonyl-ACP. Catalyzes the first condensation reaction which initiates fatty acid synthesis and may therefore play a role in governing the total rate of fatty acid production. Possesses both acetoacetyl-ACP synthase and acetyl transacylase activities. Its substrate specificity determines the biosynthesis of branched-chain and/or straight-chain of fatty acids. In Blochmanniella pennsylvanica (strain BPEN), this protein is Beta-ketoacyl-[acyl-carrier-protein] synthase III.